The following is a 279-amino-acid chain: Pantothenate synthetase (279 aa).

ATP is bound at residue 26–33 (MGNLHEGH). His33 serves as the catalytic Proton donor. Gln57 provides a ligand contact to (R)-pantoate. Gln57 is a binding site for beta-alanine. 144–147 (GKKD) lines the ATP pocket. Gln150 is a binding site for (R)-pantoate. ATP is bound by residues Val173 and 181 to 184 (LSSR).

This sequence belongs to the pantothenate synthetase family. In terms of assembly, homodimer.

The protein localises to the cytoplasm. It catalyses the reaction (R)-pantoate + beta-alanine + ATP = (R)-pantothenate + AMP + diphosphate + H(+). The protein operates within cofactor biosynthesis; (R)-pantothenate biosynthesis; (R)-pantothenate from (R)-pantoate and beta-alanine: step 1/1. Functionally, catalyzes the condensation of pantoate with beta-alanine in an ATP-dependent reaction via a pantoyl-adenylate intermediate. This chain is Pantothenate synthetase, found in Burkholderia vietnamiensis (strain G4 / LMG 22486) (Burkholderia cepacia (strain R1808)).